A 432-amino-acid polypeptide reads, in one-letter code: NADH-quinone oxidoreductase subunit D (432 aa).

The protein belongs to the complex I 49 kDa subunit family. NDH-1 is composed of 14 different subunits. Subunits NuoB, C, D, E, F, and G constitute the peripheral sector of the complex.

It localises to the cell membrane. The enzyme catalyses a quinone + NADH + 5 H(+)(in) = a quinol + NAD(+) + 4 H(+)(out). Its function is as follows. NDH-1 shuttles electrons from NADH, via FMN and iron-sulfur (Fe-S) centers, to quinones in the respiratory chain. The immediate electron acceptor for the enzyme in this species is believed to be a menaquinone. Couples the redox reaction to proton translocation (for every two electrons transferred, four hydrogen ions are translocated across the cytoplasmic membrane), and thus conserves the redox energy in a proton gradient. This is NADH-quinone oxidoreductase subunit D from Mycobacterium marinum (strain ATCC BAA-535 / M).